The chain runs to 468 residues: UDP-N-acetylmuramate--L-alanine ligase (468 aa).

121-127 (GSHGKTT) is an ATP binding site.

Belongs to the MurCDEF family.

The protein resides in the cytoplasm. The enzyme catalyses UDP-N-acetyl-alpha-D-muramate + L-alanine + ATP = UDP-N-acetyl-alpha-D-muramoyl-L-alanine + ADP + phosphate + H(+). It participates in cell wall biogenesis; peptidoglycan biosynthesis. In terms of biological role, cell wall formation. This chain is UDP-N-acetylmuramate--L-alanine ligase, found in Borreliella burgdorferi (strain ATCC 35210 / DSM 4680 / CIP 102532 / B31) (Borrelia burgdorferi).